The sequence spans 87 residues: HssA/B-like protein 18 (87 aa).

The protein belongs to the hssA/B family.

The chain is HssA/B-like protein 18 (hssl18) from Dictyostelium discoideum (Social amoeba).